We begin with the raw amino-acid sequence, 365 residues long: MAGDMQGVRVVEKYSPVIVMVMSNVAMGSVNALVKKALDVGVNHMVIGAYRMAISALILVPFAYVLERKTRPQITFRLMVDHFVSGLLGASLMQFFFLLGLSYTSATVSCALVSMLPAITFALALIFRTENVKILKTKAGMLKVIGTLICISGALFLTFYKGPQISNSHSHSHGGASHNNNDQDKANNWLLGCLYLTIGTVLLSLWMLFQGTLSIKYPCKYSSTCLMSIFAAFQCALLSLYKSRDVNDWIIDDRFVITVIIYAGVVGQAMTTVATTWGIKKLGAVFASAFFPLTLISATLFDFLILHTPLYLGSVIGSLVTITGLYMFLWGKNKETESSTALSSGMDNEAQYTTPNKDNDSKSPV.

10 helical membrane passes run 14 to 34, 46 to 66, 83 to 103, 107 to 127, 139 to 159, 189 to 209, 221 to 241, 255 to 275, 285 to 305, and 310 to 330; these read YSPV…NALV, VIGA…AYVL, FVSG…GLSY, TVSC…ALIF, AGML…FLTF, WLLG…WMLF, YSST…LSLY, FVIT…TVAT, VFAS…DFLI, and LYLG…MFLW. One can recognise an EamA 1 domain in the interval 27–157; it reads MGSVNALVKK…LICISGALFL (131 aa). The EamA 2 domain occupies 223-329; sequence STCLMSIFAA…VTITGLYMFL (107 aa). Residues 340–356 show a composition bias toward polar residues; the sequence is TALSSGMDNEAQYTTPN. Positions 340-365 are disordered; sequence TALSSGMDNEAQYTTPNKDNDSKSPV.

It belongs to the drug/metabolite transporter (DMT) superfamily. Plant drug/metabolite exporter (P-DME) (TC 2.A.7.4) family.

Its subcellular location is the membrane. The sequence is that of WAT1-related protein At1g01070 from Arabidopsis thaliana (Mouse-ear cress).